We begin with the raw amino-acid sequence, 88 residues long: Class I hydrophobin F (88 aa).

An N-terminal signal peptide occupies residues 1–21 (MLSRLFTVPAILLATLGSAAT). 4 disulfides stabilise this stretch: Cys-30/Cys-67, Cys-34/Cys-58, Cys-35/Cys-51, and Cys-68/Cys-84.

It belongs to the fungal hydrophobin family.

It localises to the secreted. The protein localises to the cell wall. It is found in the vacuole. The protein resides in the cytoplasmic vesicle. Functionally, aerial growth, conidiation, and dispersal of filamentous fungi in the environment rely upon a capability of their secreting small amphipathic proteins called hydrophobins (HPBs) with low sequence identity. Class I can self-assemble into an outermost layer of rodlet bundles on aerial cell surfaces, conferring cellular hydrophobicity that supports fungal growth, development and dispersal; whereas Class II form highly ordered films at water-air interfaces through intermolecular interactions but contribute nothing to the rodlet structure. Hyd1F contributes to certain cell wall-related features, such as hydrophobicity but is not involved in cell wall-related events during fungal proliferation in host hemocoel. Does not contribute to conidial hydrophobicity. This is Class I hydrophobin F from Beauveria bassiana (strain ARSEF 2860) (White muscardine disease fungus).